Reading from the N-terminus, the 154-residue chain is Insulin-like growth factor 1 (154 aa).

The segment at 50 to 78 is b; it reads GPETLCGAELVDALQFVCGDRGFYFNKPT. Cystine bridges form between Cys-55/Cys-97, Cys-67/Cys-110, and Cys-96/Cys-101. The c stretch occupies residues 79 to 90; that stretch reads GYGSSSRRAPQT. Positions 91 to 111 are a; the sequence is GIVDECCFRSCDLRRLEMYCA. The tract at residues 112-119 is d; the sequence is PLKAAKSA. Residues 120 to 154 constitute a propeptide, e peptide; sequence RSVRAQRHTDMPKAQKEVHLKNTSRGSAGNKNYRM. Residues 121-154 are disordered; it reads SVRAQRHTDMPKAQKEVHLKNTSRGSAGNKNYRM. Residues 126–139 are compositionally biased toward basic and acidic residues; sequence RHTDMPKAQKEVHL. A compositionally biased stretch (polar residues) spans 140–154; sequence KNTSRGSAGNKNYRM.

The protein belongs to the insulin family. Forms a ternary complex with IGFR1 and ITGAV:ITGB3. Forms a ternary complex with IGFR1 and ITGA6:ITGB4. Forms a ternary complex with IGFBP3 and ALS.

The protein localises to the secreted. The insulin-like growth factors, isolated from plasma, are structurally and functionally related to insulin but have a much higher growth-promoting activity. May be a physiological regulator of [1-14C]-2-deoxy-D-glucose (2DG) transport and glycogen synthesis in osteoblasts. Stimulates glucose transport in bone-derived osteoblastic (PyMS) cells and is effective at much lower concentrations than insulin, not only regarding glycogen and DNA synthesis but also with regard to enhancing glucose uptake. May play a role in synapse maturation. Ca(2+)-dependent exocytosis of IGF1 is required for sensory perception of smell in the olfactory bulb. Acts as a ligand for IGF1R. Binds to the alpha subunit of IGF1R, leading to the activation of the intrinsic tyrosine kinase activity which autophosphorylates tyrosine residues in the beta subunit thus initiating a cascade of down-stream signaling events leading to activation of the PI3K-AKT/PKB and the Ras-MAPK pathways. Binds to integrins ITGAV:ITGB3 and ITGA6:ITGB4. Its binding to integrins and subsequent ternary complex formation with integrins and IGFR1 are essential for IGF1 signaling. Induces the phosphorylation and activation of IGFR1, MAPK3/ERK1, MAPK1/ERK2 and AKT1. As part of the MAPK/ERK signaling pathway, acts as a negative regulator of apoptosis in cardiomyocytes via promotion of STUB1/CHIP-mediated ubiquitination and degradation of ICER-type isoforms of CREM. This chain is Insulin-like growth factor 1, found in Ovis aries (Sheep).